The sequence spans 559 residues: MISDNARAGMQQAPARSLFNALGFTPEEMKKPMVGIVSSFNEIVPGHMNIDKIVEAVKLGVAEAGGVPVVFPAIAVCDGIAMGHVGMKYSLVTRDLIADSTECMAIAHQFDALVMVPNCDKNVPGLLMAAARLNLPTVFVSGGPMLAGHVKGRKRSLSSMFEAVGSYAAGTMTEDDVCEYENKVCPTCGSCSGMYTANSMNCLTEALGMGLRGNGTIPAVYSERIRLAKHAGMAVMDMYNKGIKARDIITKDAIMNALTVDMALGCSTNSMLHLPAIAHEIGFDFDISFANPISERTPNLCHLAPAGPTYMEDLNEAGGVWAVMKELADIGLLNTDCMTVTGKTVGENIKNAVNRDPEVIRPVDNPYSKTGGLAVLKGNLAPDGSVVKRSAVVDEMMVHEGPARVFDCEEDAIAAIKGGKIVEGDVVVIRYEGPKGGPGMREMLNPTSAIAGMGLGSSVALITDGRFSGASRGASIGHVSPEAAVGGPIALVEEGDIIKIDIPNMKLELDVSDEVLAERKAKWQPREPKVTTGYLKRYAALVTSGNRGAILALPGEQNA.

D78 lines the Mg(2+) pocket. C119 lines the [2Fe-2S] cluster pocket. Mg(2+)-binding residues include D120 and K121. N6-carboxylysine is present on K121. Position 191 (C191) interacts with [2Fe-2S] cluster. E442 is a Mg(2+) binding site. The active-site Proton acceptor is the S468.

It belongs to the IlvD/Edd family. As to quaternary structure, homodimer. The cofactor is [2Fe-2S] cluster. It depends on Mg(2+) as a cofactor.

It carries out the reaction (2R)-2,3-dihydroxy-3-methylbutanoate = 3-methyl-2-oxobutanoate + H2O. The catalysed reaction is (2R,3R)-2,3-dihydroxy-3-methylpentanoate = (S)-3-methyl-2-oxopentanoate + H2O. The protein operates within amino-acid biosynthesis; L-isoleucine biosynthesis; L-isoleucine from 2-oxobutanoate: step 3/4. It participates in amino-acid biosynthesis; L-valine biosynthesis; L-valine from pyruvate: step 3/4. In terms of biological role, functions in the biosynthesis of branched-chain amino acids. Catalyzes the dehydration of (2R,3R)-2,3-dihydroxy-3-methylpentanoate (2,3-dihydroxy-3-methylvalerate) into 2-oxo-3-methylpentanoate (2-oxo-3-methylvalerate) and of (2R)-2,3-dihydroxy-3-methylbutanoate (2,3-dihydroxyisovalerate) into 2-oxo-3-methylbutanoate (2-oxoisovalerate), the penultimate precursor to L-isoleucine and L-valine, respectively. The chain is Dihydroxy-acid dehydratase from Agathobacter rectalis (strain ATCC 33656 / DSM 3377 / JCM 17463 / KCTC 5835 / VPI 0990) (Eubacterium rectale).